Here is a 153-residue protein sequence, read N- to C-terminus: Xanthine-guanine phosphoribosyltransferase (153 aa).

Residues 37–38 (RG) and 89–97 (DDLVDTGNT) each bind 5-phospho-alpha-D-ribose 1-diphosphate. Residue Asp-90 coordinates Mg(2+). Asp-93 and Ile-136 together coordinate guanine. Residues Asp-93 and Ile-136 each coordinate xanthine. GMP-binding positions include 93–97 (DTGNT) and 135–136 (WI).

It belongs to the purine/pyrimidine phosphoribosyltransferase family. XGPT subfamily. As to quaternary structure, homotetramer. Requires Mg(2+) as cofactor.

The protein localises to the cell inner membrane. It catalyses the reaction GMP + diphosphate = guanine + 5-phospho-alpha-D-ribose 1-diphosphate. The catalysed reaction is XMP + diphosphate = xanthine + 5-phospho-alpha-D-ribose 1-diphosphate. The enzyme catalyses IMP + diphosphate = hypoxanthine + 5-phospho-alpha-D-ribose 1-diphosphate. It participates in purine metabolism; GMP biosynthesis via salvage pathway; GMP from guanine: step 1/1. It functions in the pathway purine metabolism; XMP biosynthesis via salvage pathway; XMP from xanthine: step 1/1. Functionally, purine salvage pathway enzyme that catalyzes the transfer of the ribosyl-5-phosphate group from 5-phospho-alpha-D-ribose 1-diphosphate (PRPP) to the N9 position of the 6-oxopurines guanine and xanthine to form the corresponding ribonucleotides GMP (guanosine 5'-monophosphate) and XMP (xanthosine 5'-monophosphate), with the release of PPi. To a lesser extent, also acts on hypoxanthine. This chain is Xanthine-guanine phosphoribosyltransferase, found in Pasteurella multocida (strain Pm70).